The sequence spans 418 residues: Gamma-glutamyl phosphate reductase (418 aa).

The protein belongs to the gamma-glutamyl phosphate reductase family.

It localises to the cytoplasm. The catalysed reaction is L-glutamate 5-semialdehyde + phosphate + NADP(+) = L-glutamyl 5-phosphate + NADPH + H(+). It functions in the pathway amino-acid biosynthesis; L-proline biosynthesis; L-glutamate 5-semialdehyde from L-glutamate: step 2/2. Catalyzes the NADPH-dependent reduction of L-glutamate 5-phosphate into L-glutamate 5-semialdehyde and phosphate. The product spontaneously undergoes cyclization to form 1-pyrroline-5-carboxylate. The chain is Gamma-glutamyl phosphate reductase from Pelodictyon phaeoclathratiforme (strain DSM 5477 / BU-1).